Here is a 552-residue protein sequence, read N- to C-terminus: 4-coumarate--CoA ligase-like 4 (552 aa).

The interval 182–205 is disordered; the sequence is ISATTPDPARRKDRVTQDDPATLL. Residues 189–198 are compositionally biased toward basic and acidic residues; that stretch reads PARRKDRVTQ. 6 residues coordinate ATP: Ser207, Ser208, Gly209, Thr210, Thr211, and Lys215. Tyr256 contributes to the (E)-4-coumaroyl-AMP binding site. Lys277 is a CoA binding site. Positions 279 to 346 are SBD1; that stretch reads ELPEMLRSIN…EKYPQVEILQ (68 aa). (E)-4-coumaroyl-AMP-binding residues include Gly324, Gln346, Gly347, and Thr351. The ATP site is built by Gln346, Gly347, Thr351, Asp432, and Arg447. Residues 347-411 form an SBD2 region; sequence GYGLTESTAI…IRGPYVMKGY (65 aa). Positions 449 and 453 each coordinate (E)-4-coumaroyl-AMP. 2 residues coordinate CoA: Lys455 and Gly456. ATP is bound at residue Lys538.

The protein belongs to the ATP-dependent AMP-binding enzyme family. Requires Mg(2+) as cofactor.

The catalysed reaction is (E)-4-coumarate + ATP + CoA = (E)-4-coumaroyl-CoA + AMP + diphosphate. It carries out the reaction (E)-4-coumarate + ATP + H(+) = (E)-4-coumaroyl-AMP + diphosphate. It catalyses the reaction (E)-4-coumaroyl-AMP + CoA = (E)-4-coumaroyl-CoA + AMP + H(+). Its function is as follows. Carboxylate--CoA ligase that may use 4-coumarate as substrate. Follows a two-step reaction mechanism, wherein the carboxylate substrate first undergoes adenylation by ATP, followed by a thioesterification in the presence of CoA to yield the final CoA thioester. This Oryza sativa subsp. japonica (Rice) protein is 4-coumarate--CoA ligase-like 4 (4CLL4).